We begin with the raw amino-acid sequence, 213 residues long: Orotate phosphoribosyltransferase (213 aa).

Lys-26 contributes to the 5-phospho-alpha-D-ribose 1-diphosphate binding site. 34–35 (FF) contributes to the orotate binding site. 5-phospho-alpha-D-ribose 1-diphosphate is bound by residues 72 to 73 (YK), Arg-99, Lys-100, Lys-103, His-105, and 124 to 132 (DDVITAGTA). Residues Thr-128 and Arg-156 each coordinate orotate.

The protein belongs to the purine/pyrimidine phosphoribosyltransferase family. PyrE subfamily. In terms of assembly, homodimer. Mg(2+) serves as cofactor.

The enzyme catalyses orotidine 5'-phosphate + diphosphate = orotate + 5-phospho-alpha-D-ribose 1-diphosphate. Its pathway is pyrimidine metabolism; UMP biosynthesis via de novo pathway; UMP from orotate: step 1/2. Functionally, catalyzes the transfer of a ribosyl phosphate group from 5-phosphoribose 1-diphosphate to orotate, leading to the formation of orotidine monophosphate (OMP). This Aliivibrio fischeri (strain MJ11) (Vibrio fischeri) protein is Orotate phosphoribosyltransferase.